Consider the following 154-residue polypeptide: Melatonin receptor type 1A (154 aa).

Topologically, residues 1–19 are cytoplasmic; that stretch reads YCYICHSLKYDRWYSNRNS. A helical transmembrane segment spans residues 20 to 40; sequence LCCVFLICVLTLVAIVPNLCM. Residues 41–62 lie on the Extracellular side of the membrane; sequence GTLQYDPRIYSCTFAQSVSSAY. Residues 63-83 form a helical membrane-spanning segment; that stretch reads TIAVVVFHFLVPMVIVIFRYL. Residues 84 to 115 lie on the Cytoplasmic side of the membrane; that stretch reads RIWVLVLQIRWRAKPENNPRLKPQDFRNFVTM. Residues 116-136 form a helical membrane-spanning segment; that stretch reads FVVFVLFAICWAPLNFIGLAV. The Extracellular segment spans residues 137–149; sequence ASDPASMAPRIPE.

The protein belongs to the G-protein coupled receptor 1 family.

It localises to the cell membrane. Functionally, high affinity receptor for melatonin. Likely to mediate the reproductive and circadian actions of melatonin. The activity of this receptor is mediated by pertussis toxin sensitive G proteins that inhibit adenylate cyclase activity. The polypeptide is Melatonin receptor type 1A (MTNR1A) (Sus scrofa (Pig)).